The sequence spans 400 residues: tRNA(Met) cytidine acetate ligase (400 aa).

ATP is bound by residues 7–20 (IVEY…HLYH), Gly101, Asn159, and 184–185 (RI).

Belongs to the TmcAL family.

Its subcellular location is the cytoplasm. The catalysed reaction is cytidine(34) in elongator tRNA(Met) + acetate + ATP = N(4)-acetylcytidine(34) in elongator tRNA(Met) + AMP + diphosphate. Its function is as follows. Catalyzes the formation of N(4)-acetylcytidine (ac(4)C) at the wobble position of elongator tRNA(Met), using acetate and ATP as substrates. First activates an acetate ion to form acetyladenylate (Ac-AMP) and then transfers the acetyl group to tRNA to form ac(4)C34. The chain is tRNA(Met) cytidine acetate ligase from Caldicellulosiruptor bescii (strain ATCC BAA-1888 / DSM 6725 / KCTC 15123 / Z-1320) (Anaerocellum thermophilum).